The following is a 777-amino-acid chain: uncharacterized protein (777 aa).

Disordered regions lie at residues 1–101 (MNNN…NLSN), 128–150 (SYNN…NDDN), 219–267 (HHIH…NNMN), 334–366 (SLPF…GIDD), 391–466 (ISNS…ATIS), 529–577 (KNLN…NNKG), 590–622 (LAQE…ISTI), and 713–751 (EKQG…KWKP). 2 stretches are compositionally biased toward low complexity: residues 128–147 (SYNN…NNIN) and 243–265 (NNNN…NHNN). A compositionally biased stretch (polar residues) spans 334–343 (SLPFSSLSDN). Over residues 344–366 (NGDDDDDGIDDGIDDGIDDGIDD) the composition is skewed to acidic residues. Over residues 391 to 407 (ISNSFHQNQSPCNNSFK) the composition is skewed to polar residues. Low complexity-rich tracts occupy residues 408–466 (NNNN…ATIS) and 532–574 (NNNN…NNKN). Positions 597-606 (EQNKTKKELE) are enriched in basic and acidic residues. Composition is skewed to acidic residues over residues 607–620 (EVKE…EEIS) and 718–730 (DDPE…DSDS). The segment covering 731 to 740 (DSNSNSDSSD) has biased composition (low complexity).

This is an uncharacterized protein from Dictyostelium discoideum (Social amoeba).